A 366-amino-acid chain; its full sequence is Galactoside alpha-(1,2)-fucosyltransferase 1 (366 aa).

Residues 1 to 8 (MWPLSHRH) lie on the Cytoplasmic side of the membrane. Residues 9-25 (LCLAFLLVCVLSAISFF) form a helical; Signal-anchor for type II membrane protein membrane-spanning segment. Residues 26 to 366 (LHIHQDSFPH…LSPLWTLAEP (341 aa)) lie on the Lumenal side of the membrane. N-linked (GlcNAc...) asparagine glycans are attached at residues asparagine 66, asparagine 302, and asparagine 328.

It belongs to the glycosyltransferase 11 family.

Its subcellular location is the golgi apparatus. The protein resides in the golgi stack membrane. It carries out the reaction a beta-D-galactosyl-(1-&gt;4)-N-acetyl-beta-D-glucosaminyl derivative + GDP-beta-L-fucose = an alpha-L-Fuc-(1-&gt;2)-beta-D-Gal-(1-&gt;4)-beta-D-GlcNAc derivative + GDP + H(+). The catalysed reaction is a ganglioside GA1 + GDP-beta-L-fucose = a ganglioside Fuc-GA1 + GDP + H(+). The enzyme catalyses a beta-D-Gal-(1-&gt;3)-beta-D-GlcNAc-(1-&gt;3)-beta-D-Gal-(1-&gt;4)-beta-D-Glc-(1&lt;-&gt;1')-Cer(d18:1(4E)) + GDP-beta-L-fucose = alpha-L-fucosyl-(1-&gt;2)- beta-D-galactosyl-(1-&gt;3)-N-acetyl-beta-D-glucosaminyl-(1-&gt;3)-beta-D-galactosyl-(1-&gt;4)-beta-D-glucosyl-(1&lt;-&gt;1')-N-acylsphing-4-enine + GDP + H(+). It catalyses the reaction a neolactoside nLc4Cer(d18:1(4E)) + GDP-beta-L-fucose = a neolactoside IV(2)-alpha-Fuc-nLc4Cer(d18:1(4E)) + GDP + H(+). It carries out the reaction a ganglioside GM1 + GDP-beta-L-fucose = a ganglioside Fuc-GM1 + GDP + H(+). The catalysed reaction is beta-D-galactosyl-(1-&gt;3)-N-acetyl-D-galactosamine + GDP-beta-L-fucose = alpha-L-fucosyl-(1-&gt;2)-beta-D-galactosyl-(1-&gt;3)-N-acetyl-D-galactosamine + GDP + H(+). The protein operates within protein modification; protein glycosylation. In terms of biological role, catalyzes the transfer of L-fucose, from a guanosine diphosphate-beta-L-fucose, to the terminal galactose residue of glycoconjugates through an alpha(1,2) linkage leading to H antigen synthesis that is an intermediate substrate in the synthesis of ABO blood group antigens. H antigen is essential for maturation of the glomerular layer of the main olfactory bulb, in cell migration and early cell-cell contacts during tumor associated angiogenesis. Preferentially fucosylates soluble lactose and to a lesser extent fucosylates glycolipids gangliosides GA1 and GM1a. This Lagothrix lagotricha (Brown woolly monkey) protein is Galactoside alpha-(1,2)-fucosyltransferase 1.